Here is a 98-residue protein sequence, read N- to C-terminus: Histone H4-1 (98 aa).

Residues 1 to 14 (MGGKGGKGGKGLGK) show a composition bias toward gly residues. Residues 1-20 (MGGKGGKGGKGLGKVGAKKR) form a disordered region.

The protein belongs to the histone H4 family. As to quaternary structure, the nucleosome is a histone octamer containing two molecules each of H2A, H2B, H3 and H4 assembled in one H3-H4 heterotetramer and two H2A-H2B heterodimers. The octamer wraps approximately 147 bp of DNA.

The protein localises to the nucleus. It is found in the chromosome. In terms of biological role, core component of nucleosome. Nucleosomes wrap and compact DNA into chromatin, limiting DNA accessibility to the cellular machineries which require DNA as a template. Histones thereby play a central role in transcription regulation, DNA repair, DNA replication and chromosomal stability. DNA accessibility is regulated via a complex set of post-translational modifications of histones, also called histone code, and nucleosome remodeling. This is Histone H4-1 from Blepharisma japonicum.